The following is a 113-amino-acid chain: ATP-dependent Clp protease adapter protein ClpS (113 aa).

The protein belongs to the ClpS family. As to quaternary structure, binds to the N-terminal domain of the chaperone ClpA.

Involved in the modulation of the specificity of the ClpAP-mediated ATP-dependent protein degradation. The protein is ATP-dependent Clp protease adapter protein ClpS of Corynebacterium diphtheriae (strain ATCC 700971 / NCTC 13129 / Biotype gravis).